The sequence spans 25 residues: SPbeta prophage-derived uncharacterized protein YotF (25 aa).

The protein is SPbeta prophage-derived uncharacterized protein YotF (yotF) of Bacillus subtilis (strain 168).